Consider the following 249-residue polypeptide: Enolase-phosphatase E1 (249 aa).

Residues aspartate 14 and glutamate 16 each contribute to the Mg(2+) site. Residues serine 141–serine 142 and lysine 175 each bind substrate. Position 200 (aspartate 200) interacts with Mg(2+).

The protein belongs to the HAD-like hydrolase superfamily. MasA/MtnC family. As to quaternary structure, monomer. Requires Mg(2+) as cofactor.

Its subcellular location is the cytoplasm. The protein localises to the nucleus. It catalyses the reaction 5-methylsulfanyl-2,3-dioxopentyl phosphate + H2O = 1,2-dihydroxy-5-(methylsulfanyl)pent-1-en-3-one + phosphate. The protein operates within amino-acid biosynthesis; L-methionine biosynthesis via salvage pathway; L-methionine from S-methyl-5-thio-alpha-D-ribose 1-phosphate: step 3/6. Its pathway is amino-acid biosynthesis; L-methionine biosynthesis via salvage pathway; L-methionine from S-methyl-5-thio-alpha-D-ribose 1-phosphate: step 4/6. Its function is as follows. Bifunctional enzyme that catalyzes the enolization of 2,3-diketo-5-methylthiopentyl-1-phosphate (DK-MTP-1-P) into the intermediate 2-hydroxy-3-keto-5-methylthiopentenyl-1-phosphate (HK-MTPenyl-1-P), which is then dephosphorylated to form the acireductone 1,2-dihydroxy-3-keto-5-methylthiopentene (DHK-MTPene). This Drosophila mojavensis (Fruit fly) protein is Enolase-phosphatase E1.